A 58-amino-acid chain; its full sequence is Small ribosomal subunit protein eS30 (58 aa).

A disordered region spans residues 1 to 58 (MGKVHGSLARAGKVKNQTPKVPKLDKKKRLTGRAKKRQLYNRRFSDNGGRKKGPNSKA). Residues 25-40 (DKKKRLTGRAKKRQLY) are compositionally biased toward basic residues.

This sequence belongs to the eukaryotic ribosomal protein eS30 family. In terms of assembly, component of the small ribosomal subunit. Mature ribosomes consist of a small (40S) and a large (60S) subunit. The 40S subunit contains about 32 different proteins and 1 molecule of RNA (18S). The 60S subunit contains about 42 different proteins and 3 molecules of RNA (28S, 5.8S and 5S).

The protein resides in the cytoplasm. Functionally, component of the ribosome, a large ribonucleoprotein complex responsible for the synthesis of proteins in the cell. The small ribosomal subunit (SSU) binds messenger RNAs (mRNAs) and translates the encoded message by selecting cognate aminoacyl-transfer RNA (tRNA) molecules. The large subunit (LSU) contains the ribosomal catalytic site termed the peptidyl transferase center (PTC), which catalyzes the formation of peptide bonds, thereby polymerizing the amino acids delivered by tRNAs into a polypeptide chain. The nascent polypeptides leave the ribosome through a tunnel in the LSU and interact with protein factors that function in enzymatic processing, targeting, and the membrane insertion of nascent chains at the exit of the ribosomal tunnel. In Plasmodium falciparum (isolate 3D7), this protein is Small ribosomal subunit protein eS30.